The chain runs to 274 residues: MAIHLYKTSTPSTRNGAVDSQVKSNPRNNLIYGQHHCGKGRNARGIITARHRGGGHKRLYRKIDFRRNAKDIYGRIVTIEYDPNRNAYICLIHYGDGEKRYILHPRGAIIGDTIVSGTEVPIKMGNALPLTDMPLGTAIHNIEITLGKGGQLARAAGAVAKLIAKEGKSATLKLPSGEVRLISKNCSATVGQVGNVGVNQKSLGRAGSKCWLGKRPVVRGVVMNPVDHPHGGGEGRAPIGRKKPVTPWGYPALGRRTRKRKKYSETLILRRRSK.

2 disordered regions span residues 1-22 (MAIH…DSQV) and 225-274 (PVDH…RRSK).

The protein belongs to the universal ribosomal protein uL2 family. As to quaternary structure, part of the 50S ribosomal subunit.

The protein resides in the plastid. It localises to the chloroplast. In Nasturtium officinale (Watercress), this protein is Large ribosomal subunit protein uL2cz/uL2cy (rpl2-A).